Reading from the N-terminus, the 164-residue chain is FMN reductase (NADH) RutF (164 aa).

This sequence belongs to the non-flavoprotein flavin reductase family. RutF subfamily.

The enzyme catalyses FMNH2 + NAD(+) = FMN + NADH + 2 H(+). In terms of biological role, catalyzes the reduction of FMN to FMNH2 which is used to reduce pyrimidine by RutA via the Rut pathway. The polypeptide is FMN reductase (NADH) RutF (Escherichia coli O6:K15:H31 (strain 536 / UPEC)).